A 417-amino-acid chain; its full sequence is Dibenzothiophene monooxygenase (417 aa).

Positions 18–124 (NDPVAVARGL…HLYTQIAQNN (107 aa)) are helical N-terminus. Residues Tyr-96, 129–134 (NASSEN), 159–163 (KHFCS), Arg-282, 369–370 (AR), and His-391 contribute to the FMN site. The interval 125-233 (WWTGNASSEN…KVEPDEVLGA (109 aa)) is central beta-barrel N-terminus. The lid loop stretch occupies residues 131–142 (SSENNSHVLDWK). The interval 234–417 (PNAFVLAFIQ…GQYPIPGFTS (184 aa)) is helical C-terminus.

It belongs to the DszC flavin monooxygenase family. In terms of assembly, homotetramer formed by a dimer of dimers; FMN binds between monomers of the homodimer.

It localises to the cytoplasm. The enzyme catalyses dibenzothiophene + 2 FMNH2 + 2 O2 = dibenzothiophene 5,5-dioxide + 2 FMN + 2 H2O + 2 H(+). It catalyses the reaction dibenzothiophene + FMNH2 + O2 = dibenzothiophene 5-oxide + FMN + H2O + H(+). The catalysed reaction is dibenzothiophene 5-oxide + FMNH2 + O2 = dibenzothiophene 5,5-dioxide + FMN + H2O + H(+). The protein operates within sulfur metabolism; dibenzothiophene degradation. With respect to regulation, DBT degradation completely inhibited by Cu(2+), Mn(2+), p-chloromercuribenzoic acid, 2,2-bipyridyl, 1,10-phenanthroline, and strongly inhibited by Zn(2+), 5,5'- Dithiobis(2-nitrobenzoic acid) and 8-quinolinol. In terms of biological role, catalyzes the first step of the '4S' desulfurization pathway that removes covalently bound sulfur from dibenzothiophene (DBT) without breaking carbon-carbon bonds. Sulfur dioxygenase which converts DBT to DBT-sulfone (DBTO2 or DBT 5,5-dioxide) in a stepwise manner. Also acts on thioxanthen-9-one and 4,6-dimethyl DBT and 2,8-dimethyl DBT. The chain is Dibenzothiophene monooxygenase from Rhodococcus erythropolis (Arthrobacter picolinophilus).